We begin with the raw amino-acid sequence, 408 residues long: MASKKFAVKCGNFAVLVDLHILPQGSNKDTSWFSEQKKEEVCLLLKETIDSRVQEYLEVRKQHRPSNAEFTRSNPLSLKGYGFQITAYFLKRGIRLRCIRSTQNAELCVFPDRFVVCVSQLAFSRDLLASQNEDLTERVLHGVSDYFAECAESSLPPSAKLRRNALKEIVKRTETKSSVTSKSQTRRDTVETSSDSVIAEIARRRNDGQASSSPPSESMGQAKDSIKAAESHWGLPVQKLEKVNQTQPEDTSGQQKPHPGERLKTGLLSRSPVCSCESASPCPKQSPRVAKTQQKRRNCSSAEDFDHHGRVSLGSDRLVPREIIVEKSKAVRVLPASELSDPGLLLKQDLAKTTSKEELHVLESLSSRHLMKNNPGQAQQTGLATNTERLSTIQNSPTKKRKKYERGH.

Residues K61 and K79 each participate in a glycyl lysine isopeptide (Lys-Gly) (interchain with G-Cter in SUMO2) cross-link. S130 is modified (phosphoserine). Glycyl lysine isopeptide (Lys-Gly) (interchain with G-Cter in SUMO2) cross-links involve residues K167 and K176. Residues 173–226 (TETKSSVTSKSQTRRDTVETSSDSVIAEIARRRNDGQASSSPPSESMGQAKDSI) form a disordered region. A compositionally biased stretch (polar residues) spans 208–219 (GQASSSPPSESM). A Phosphoserine modification is found at S213. Residues K239 and K242 each participate in a glycyl lysine isopeptide (Lys-Gly) (interchain with G-Cter in SUMO2) cross-link. Residues 243 to 255 (VNQTQPEDTSGQQ) are compositionally biased toward polar residues. A disordered region spans residues 243-313 (VNQTQPEDTS…DFDHHGRVSL (71 aa)). Residues K256, K291, K347, K356, and K372 each participate in a glycyl lysine isopeptide (Lys-Gly) (interchain with G-Cter in SUMO2) cross-link. Residues 365-408 (LSSRHLMKNNPGQAQQTGLATNTERLSTIQNSPTKKRKKYERGH) form a disordered region. Residues 374–397 (NPGQAQQTGLATNTERLSTIQNSP) show a composition bias toward polar residues. Phosphothreonine is present on T392. Residues 398–408 (TKKRKKYERGH) are compositionally biased toward basic residues. A Glycyl lysine isopeptide (Lys-Gly) (interchain with G-Cter in SUMO2) cross-link involves residue K399.

Belongs to the SLX4IP family. Interacts with SLX4/BTBD12; subunit of different structure-specific endonucleases.

In Homo sapiens (Human), this protein is Protein SLX4IP (SLX4IP).